Consider the following 339-residue polypeptide: MSVLTVALDAMGGDFGPSETVPAAAQALSLLPKLNILLVGDQNQLVPLLQQHALSSHPRLHLVHASQSVSMAERPVIALRNKTDSSMRVMLELVSSGRAQACVSGGNTGALMVMAMRVLTMLPHLKRPALCSSLPNLHGRHTVMLDLGCNVNCTPEMLWQFACLGDLFAKHVHAVSSPKIALLNVGEEVIKGSKLVQETAKLLASDKQFNYIGFLEGDQLISGQADVIVCDGFTGNIALKTAEGIARFFYSQIKASNEADKVKNKSNTAAEIQTSLSVMHPDHYNGASLLGLNGIVIKSHGRADRRALSNAILHAVAEIEQQLPRRISERFIAEHTYER.

It belongs to the PlsX family. In terms of assembly, homodimer. Probably interacts with PlsY.

It localises to the cytoplasm. The enzyme catalyses a fatty acyl-[ACP] + phosphate = an acyl phosphate + holo-[ACP]. It participates in lipid metabolism; phospholipid metabolism. Catalyzes the reversible formation of acyl-phosphate (acyl-PO(4)) from acyl-[acyl-carrier-protein] (acyl-ACP). This enzyme utilizes acyl-ACP as fatty acyl donor, but not acyl-CoA. This Tolumonas auensis (strain DSM 9187 / NBRC 110442 / TA 4) protein is Phosphate acyltransferase.